A 156-amino-acid chain; its full sequence is Ribosome maturation factor RimP (156 aa).

The protein belongs to the RimP family.

It is found in the cytoplasm. In terms of biological role, required for maturation of 30S ribosomal subunits. This Bacillus cereus (strain G9842) protein is Ribosome maturation factor RimP.